Reading from the N-terminus, the 436-residue chain is 3-ketoacyl-CoA thiolase (436 aa).

Cys99 serves as the catalytic Acyl-thioester intermediate. Residues His392 and Cys422 each act as proton acceptor in the active site.

It belongs to the thiolase-like superfamily. Thiolase family. In terms of assembly, heterotetramer of two alpha chains (FadJ) and two beta chains (FadI).

Its subcellular location is the cytoplasm. It catalyses the reaction an acyl-CoA + acetyl-CoA = a 3-oxoacyl-CoA + CoA. Its pathway is lipid metabolism; fatty acid beta-oxidation. Functionally, catalyzes the final step of fatty acid oxidation in which acetyl-CoA is released and the CoA ester of a fatty acid two carbons shorter is formed. This chain is 3-ketoacyl-CoA thiolase, found in Escherichia coli O157:H7.